Reading from the N-terminus, the 413-residue chain is Type II methyltransferase M.NaeI (413 aa).

One can recognise an SAM-dependent MTase C5-type domain in the interval 4–317 (LEVVEICAGA…KRIRAALNME (314 aa)). The active site involves C78.

It belongs to the class I-like SAM-binding methyltransferase superfamily. C5-methyltransferase family.

The catalysed reaction is a 2'-deoxycytidine in DNA + S-adenosyl-L-methionine = a 5-methyl-2'-deoxycytidine in DNA + S-adenosyl-L-homocysteine + H(+). Its function is as follows. A methylase that recognizes the double-stranded sequence 5'-GCCGGC-3', methylates C-? on both strands, and protects the DNA from cleavage by the NaeI endonuclease. This Lentzea aerocolonigenes (Lechevalieria aerocolonigenes) protein is Type II methyltransferase M.NaeI.